The primary structure comprises 513 residues: 2,3-bisphosphoglycerate-independent phosphoglycerate mutase (513 aa).

Residues D13 and S63 each coordinate Mn(2+). The Phosphoserine intermediate role is filled by S63. Residues H124, 154–155 (RD), R186, R192, 262–265 (RADR), and K335 each bind substrate. The Mn(2+) site is built by D402, H406, D443, H444, and H462.

Belongs to the BPG-independent phosphoglycerate mutase family. In terms of assembly, monomer. Requires Mn(2+) as cofactor.

The catalysed reaction is (2R)-2-phosphoglycerate = (2R)-3-phosphoglycerate. Its pathway is carbohydrate degradation; glycolysis; pyruvate from D-glyceraldehyde 3-phosphate: step 3/5. Its function is as follows. Catalyzes the interconversion of 2-phosphoglycerate and 3-phosphoglycerate. This Photobacterium profundum (strain SS9) protein is 2,3-bisphosphoglycerate-independent phosphoglycerate mutase.